The sequence spans 860 residues: Leucine--tRNA ligase (860 aa).

Residues 73-83 (VLQPIGWDAFG) carry the 'HIGH' region motif. The 'KMSKS' region motif lies at 650–654 (SPADM). D653 provides a ligand contact to ATP.

It belongs to the class-I aminoacyl-tRNA synthetase family.

Its subcellular location is the cytoplasm. It catalyses the reaction tRNA(Leu) + L-leucine + ATP = L-leucyl-tRNA(Leu) + AMP + diphosphate. This chain is Leucine--tRNA ligase, found in Shigella flexneri.